The chain runs to 214 residues: Putative ras-related protein Rab-5B (214 aa).

56–63 provides a ligand contact to GTP; the sequence is GEMNTGKT. The short motif at 77-85 is the Effector region element; the sequence is TDSTIGAAF. Residues 103-107 and 161-164 contribute to the GTP site; these read DTAGQ and NKVD.

The protein belongs to the small GTPase superfamily. Rab family. This sequence lacks the C-terminal cysteine motifs subject to isoprenylation in other Rab proteins.

The sequence is that of Putative ras-related protein Rab-5B (rab5B) from Dictyostelium discoideum (Social amoeba).